The sequence spans 534 residues: Cyclin-L1 (534 aa).

2 cyclin-like regions span residues 94-196 (ELIQ…RVLK) and 209-293 (KIIV…KILQ). The interval 327–534 (LPEGAPVLDN…DHPGHSRHRR (208 aa)) is disordered. A compositionally biased stretch (basic and acidic residues) spans 389–399 (KGRESRSRSGS). Composition is skewed to low complexity over residues 400–412 (RDQS…SRSA) and 437–453 (RSGS…TYKS). Residues 400-436 (RDQSYSRSPSRSASPKHRKSESYSTSSGSKSHSRSRS) are RS. The segment covering 468 to 485 (SAHKARKSRSRSSSRSRS) has biased composition (basic residues). Basic and acidic residues predominate over residues 486 to 495 (RSRERSDHSG). Residues 496-511 (KYKKKSHYYRNHRHER) are compositionally biased toward basic residues. Positions 512–528 (SRSYERASHRYDRDHPG) are enriched in basic and acidic residues.

It belongs to the cyclin family. Cyclin L subfamily.

The protein resides in the nucleus speckle. It localises to the nucleus. It is found in the nucleoplasm. In terms of biological role, involved in pre-mRNA splicing. This Gallus gallus (Chicken) protein is Cyclin-L1 (CCNL1).